The following is a 360-amino-acid chain: SUN domain-containing protein 3 (360 aa).

The segment covering 1 to 10 (MSGRPNSRGS) has biased composition (polar residues). A disordered region spans residues 1 to 39 (MSGRPNSRGSSRLFRAPSEDASSGSSGSAVLPQEENPNA). Residues 1 to 47 (MSGRPNSRGSSRLFRAPSEDASSGSSGSAVLPQEENPNASGLTRSWK) are Nuclear-facing. The chain crosses the membrane as a helical span at residues 48–67 (AVMGMVFILTLLLLGFINHM). Over 68–360 (KLKEKAFPQK…RVHGTPKDDS (293 aa)) the chain is Perinuclear space. The stretch at 103 to 142 (KEQLELLKKESQTLENNFREILFLIEQIDVLKALLRDMQD) forms a coiled coil. Residues 196 to 357 (GASVVEAGTS…YRFRVHGTPK (162 aa)) form the SUN domain.

As to quaternary structure, self-associates. Interacts with SYNE1 and SPAG4/SUN4. Proposed to form a spermatogenesis-specific LINC complex with SYNE1 during sperm head formation possibly implicating a SUN domain-based heterotrimer with SPAG4/SUN4 associating with SYNE1.

The protein resides in the membrane. The protein localises to the nucleus envelope. Its subcellular location is the nucleus inner membrane. As a probable component of the LINC (LInker of Nucleoskeleton and Cytoskeleton) complex, involved in the connection between the nuclear lamina and the cytoskeleton. The nucleocytoplasmic interactions established by the LINC complex play an important role in the transmission of mechanical forces across the nuclear envelope and in nuclear movement and positioning. May be involved in nuclear remodeling during sperm head formation in spermatogenesis. A probable SUN3:SYNE1 LINC complex may tether spermatid nuclei to posterior cytoskeletal structures such as the manchette. The polypeptide is SUN domain-containing protein 3 (SUN3) (Bos taurus (Bovine)).